The chain runs to 1057 residues: mRNA export factor elf1 (1057 aa).

2 ABC transporter domains span residues 440–659 and 692–1019; these read IEEE…VKPE and LKMT…KKKL. Residues 477-484 and 726-733 contribute to the ATP site; these read GHNGCGKS and GPNGAGKS. Ser-733 is modified (phosphoserine). Residues 820–869 enclose the Chromo domain; it reads RRVEALIGRQKLKKSFQYEIKWFGKPHKYNTWVSREILLENGFQKFVQAF. Over residues 1020–1036 the composition is skewed to basic and acidic residues; it reads TRNEIKAKERRAREREL. Positions 1020 to 1057 are disordered; it reads TRNEIKAKERRARERELAWLQSPKGTEKPKSFFSDDEE. A phosphoserine mark is found at Ser-1041 and Ser-1053.

Belongs to the ABC transporter superfamily. ABCF family. EF3 subfamily.

It localises to the cytoplasm. The protein resides in the nucleus. Its function is as follows. Has a direct role in the mRNA export process. Appears to act within the rae1 mediated mRNA export pathway. In Schizosaccharomyces pombe (strain 972 / ATCC 24843) (Fission yeast), this protein is mRNA export factor elf1 (elf1).